The following is a 129-amino-acid chain: Putative pre-16S rRNA nuclease (129 aa).

It belongs to the YqgF nuclease family.

The protein localises to the cytoplasm. Functionally, could be a nuclease involved in processing of the 5'-end of pre-16S rRNA. This chain is Putative pre-16S rRNA nuclease, found in Campylobacter jejuni subsp. doylei (strain ATCC BAA-1458 / RM4099 / 269.97).